The following is a 150-amino-acid chain: Large ribosomal subunit protein bL9 (150 aa).

This sequence belongs to the bacterial ribosomal protein bL9 family.

Functionally, binds to the 23S rRNA. The protein is Large ribosomal subunit protein bL9 of Pectobacterium carotovorum subsp. carotovorum (strain PC1).